The primary structure comprises 354 residues: Prephenate dehydrogenase (354 aa).

Residues Lys-2–Pro-283 enclose the Prephenate/arogenate dehydrogenase domain. Lys-3 to Asp-33 contributes to the NAD(+) binding site. The region spanning Asp-287 to Val-354 is the ACT domain.

Belongs to the prephenate/arogenate dehydrogenase family.

The catalysed reaction is prephenate + NAD(+) = 3-(4-hydroxyphenyl)pyruvate + CO2 + NADH. It participates in amino-acid biosynthesis; L-tyrosine biosynthesis; (4-hydroxyphenyl)pyruvate from prephenate (NAD(+) route): step 1/1. The chain is Prephenate dehydrogenase (tyrA) from Lactococcus lactis subsp. cremoris (strain MG1363).